The following is a 511-amino-acid chain: Antagonist of mitotic exit network protein 1 (511 aa).

Disordered stretches follow at residues 27-58 (YSRP…FTPR) and 99-119 (TTPK…NILW). Positions 45 to 58 (ATISNEGSLNFTPR) are enriched in polar residues. The span at 99 to 112 (TTPKQQLPTPTTSP) shows a compositional bias: low complexity.

It belongs to the AMN1 family.

It localises to the cytoplasm. The protein resides in the nucleus. Functionally, negative regulator of the mitotic exit network (MEN), required for multiple cell cycle checkpoints. Required for daughter cell separation and chromosome stability. Involved in copper sensitivity. This chain is Antagonist of mitotic exit network protein 1 (AMN1), found in Candida glabrata (strain ATCC 2001 / BCRC 20586 / JCM 3761 / NBRC 0622 / NRRL Y-65 / CBS 138) (Yeast).